Here is a 99-residue protein sequence, read N- to C-terminus: DNA-directed RNA polymerase subunit Rpo11 (99 aa).

The protein belongs to the archaeal Rpo11/eukaryotic RPB11/RPC19 RNA polymerase subunit family. In terms of assembly, part of the RNA polymerase complex. Forms an Rpo3-Rpo10-Rpo11-Rpo12 complex upon coexpression.

It localises to the cytoplasm. The enzyme catalyses RNA(n) + a ribonucleoside 5'-triphosphate = RNA(n+1) + diphosphate. In terms of biological role, DNA-dependent RNA polymerase (RNAP) catalyzes the transcription of DNA into RNA using the four ribonucleoside triphosphates as substrates. The protein is DNA-directed RNA polymerase subunit Rpo11 of Methanocaldococcus jannaschii (strain ATCC 43067 / DSM 2661 / JAL-1 / JCM 10045 / NBRC 100440) (Methanococcus jannaschii).